Consider the following 484-residue polypeptide: DNA-binding protein (484 aa).

The segment at 1–69 (MASNQHSQRE…ESAEEEEAEP (69 aa)) is disordered. Residues 51 to 60 (SMAAIPLSPE) show a composition bias toward low complexity. Phosphotyrosine; by host is present on Tyr150. Residues Cys239 and His241 each coordinate Zn(2+). Residues 252–286 (VEMDVTSESGQRALKENPSKAKVAQNRWGRNVVQI) are flexible loop. Residues Cys294, Cys310, Cys351, Cys353, Cys405, and Cys421 each coordinate Zn(2+). The tract at residues 468–484 (ISLPTNHGDCREEPFDF) is C-terminal arm, DBP binding.

The protein belongs to the adenoviridae E2A DNA-binding protein family. Homomultimerizes on viral ssDNA bound to pTP. Forms a initiation complex with viral polymerase, pTP and hosts NFIA and POU2F1/OCT1. Interacts with host SRCAP.

The protein resides in the host nucleus. Plays a role in the elongation phase of viral strand displacement replication by unwinding the template in an ATP-independent fashion, employing its capacity to form multimers. Also enhances the rate of initiation. Released from template upon second strand synthesis. Assembles in complex with viral pTP, viral pol, host NFIA and host POU2F1/OCT1 on viral origin of replication. Covers the whole ssDNA genome during synthesis. The complementary strand synthesis induces its relese from DNA template. May inhibit cellular transcription mediated by the interaction between host SRCAP and CBP. The sequence is that of DNA-binding protein from Human adenovirus A serotype 12 (HAdV-12).